A 2812-amino-acid polypeptide reads, in one-letter code: Zonadhesin (2812 aa).

Positions 1–17 are cleaved as a signal peptide; that stretch reads MVPPVWTLLLLVGAALF. Topologically, residues 18–2757 are extracellular; sequence RKEKPPDQKL…DAPPPRKPAS (2740 aa). MAM domains are found at residues 39–204, 209–368, and 371–536; these read TQCD…SCNR, QTCS…PCGE, and PQCD…TCPV. The tract at residues 61 to 84 is disordered; sequence EDWVRASGPSPTGSTGAPGGYPNG. A compositionally biased stretch (low complexity) spans 66 to 75; it reads ASGPSPTGST. N-linked (GlcNAc...) asparagine glycans are attached at residues Asn333 and Asn493. 2 disordered regions span residues 545-884 and 904-929; these read VSPV…PTEK and EKPT…KPTI. Over residues 547–558 the composition is skewed to low complexity; sequence PVSSTGPSETTG. The segment covering 559 to 570 has biased composition (polar residues); it reads LTENPTISTKKP. Residues 573–1041 form a 66 X heptapeptide repeats (approximate) (mucin-like domain) region; it reads SIEKPSVTTE…GTTTTSRSST (469 aa). Composition is skewed to low complexity over residues 592 to 603, 651 to 675, 713 to 842, 853 to 868, and 916 to 929; these read TIPTEKPTISTE, TEKP…MEEP, SPEK…STEK, STEK…TISP, and STEK…KPTI. Residues 1044–1093 enclose the TIL 1 domain; sequence CPPNARYESCACPASCKSPRPSCGPLCREGCVCNPGFLFSDNHCIQASSC. The VWFC 1 domain maps to 1103–1148; the sequence is EPGAEWFSPNCTEHCRCWPGSRVECQISQCGTHTVCQLKNGQYGCH. Asn1112 and Asn1188 each carry an N-linked (GlcNAc...) asparagine glycan. Residues 1154 to 1331 enclose the VWFD 1 domain; it reads ATCLVYGDPH…TDQDEDQECQ (178 aa). Intrachain disulfides connect Cys1156/Cys1291 and Cys1178/Cys1330. A compositionally biased stretch (basic and acidic residues) spans 1302–1316; it reads HLKLDGSPAGDKEEL. The segment at 1302-1323 is disordered; that stretch reads HLKLDGSPAGDKEELGNSWQTD. The region spanning 1426-1479 is the TIL 2 domain; that stretch reads CPPNSKYSLCAKPCPDTCHSGFSGMFCSDRCVEACECNPGFVLSGLECIPRSQC. Residues 1480 to 1535 enclose the VWFC 2 domain; that stretch reads GCLHPAGSYFKVGERWYKPGCKELCVCESNNRIRCQPWRCRAQEFCGQQDGIYGCH. Residues 1540 to 1720 enclose the VWFD 2 domain; the sequence is ATCTASGDPH…LPESSEPGCF (181 aa). Disulfide bonds link Cys1542–Cys1680 and Cys1564–Cys1719. 2 N-linked (GlcNAc...) asparagine glycosylation sites follow: Asn1685 and Asn1804. One can recognise a TIL 3 domain in the interval 1812–1867; that stretch reads CPPGSSYSPCSSPCPDTCSSINNPRDCPKALPCAESCECQKGHILSGTSCVPLGQC. Residues 1868-1924 form the VWFC 3 domain; it reads GCTDPAGSYHPVGERWYTENTCTRLCTCSVHNNITCFQSTCKPNQICWALDGLLHCR. 2 N-linked (GlcNAc...) asparagine glycosylation sites follow: Asn1900 and Asn1946. Residues 1929–2108 form the VWFD 3 domain; that stretch reads GVCQLPGESH…KDKDIDPSCQ (180 aa). 2 disulfides stabilise this stretch: Cys1931-Cys2069 and Cys1953-Cys2107. The N-linked (GlcNAc...) asparagine glycan is linked to Asn2203. The region spanning 2211-2267 is the TIL 4 domain; that stretch reads CPAYSSYTNCLPSCSPSCWDLDGRCEGAKVPSACAEGCICQPGYVLSEDKCVPRSQC. In terms of domain architecture, VWFC 4 spans 2268–2329; that stretch reads GCKDAHGGSI…NSNCVSDKSE (62 aa). One can recognise a VWFD 4 domain in the interval 2329–2505; that stretch reads EQCSVYGDPR…SWEVKTEDAL (177 aa). A disulfide bond links Cys2331 and Cys2468. N-linked (GlcNAc...) asparagine glycosylation is found at Asn2542 and Asn2701. One can recognise a VWFC 5 domain in the interval 2652-2797; the sequence is CGCTSNGIYY…KREKTQEGDR (146 aa). An EGF-like domain is found at 2708-2744; sequence PESPCLQNPCQNDGQCREQGATFTCECEVGYGGGLCM. Disulfide bonds link Cys2712–Cys2723, Cys2717–Cys2732, and Cys2734–Cys2743. The chain crosses the membrane as a helical span at residues 2758–2778; the sequence is NLVGVLLGLLVPVVVVLLAVT. At 2779 to 2812 the chain is on the cytoplasmic side; sequence RECIYRTRRKREKTQEGDRLARLVDTDTVLDCAC.

In terms of assembly, probably forms covalent oligomers. In terms of tissue distribution, in testis, primarily in haploid spermatids.

It is found in the cell membrane. Binds in a species-specific manner to the zona pellucida of the egg. May be involved in gamete recognition and/or signaling. This Homo sapiens (Human) protein is Zonadhesin (ZAN).